A 294-amino-acid polypeptide reads, in one-letter code: uncharacterized protein (294 aa).

Disordered stretches follow at residues Met-1 to Pro-148 and Asp-268 to Leu-294. Ser-34 and Ser-35 each carry phosphoserine. Low complexity predominate over residues Ser-35–Asp-44. Basic and acidic residues predominate over residues Asp-52 to Gly-62. Ser-71 and Ser-90 each carry phosphoserine. Composition is skewed to basic and acidic residues over residues Pro-73–Lys-92 and Gly-278–Leu-294.

This is an uncharacterized protein from Homo sapiens (Human).